The primary structure comprises 294 residues: Cytidine deaminase (294 aa).

CMP/dCMP-type deaminase domains lie at 48-168 (DEDA…FGPK) and 186-294 (LTGD…VLLA). Residue 89–91 (NME) coordinates substrate. Residue His102 coordinates Zn(2+). The active-site Proton donor is Glu104. Residues Cys129 and Cys132 each contribute to the Zn(2+) site.

This sequence belongs to the cytidine and deoxycytidylate deaminase family. In terms of assembly, homodimer. Requires Zn(2+) as cofactor.

It carries out the reaction cytidine + H2O + H(+) = uridine + NH4(+). The enzyme catalyses 2'-deoxycytidine + H2O + H(+) = 2'-deoxyuridine + NH4(+). In terms of biological role, this enzyme scavenges exogenous and endogenous cytidine and 2'-deoxycytidine for UMP synthesis. The sequence is that of Cytidine deaminase from Escherichia coli O7:K1 (strain IAI39 / ExPEC).